We begin with the raw amino-acid sequence, 338 residues long: MSTLRLLISDSYDPWFNLAVEECIFRQMPATQRVLFLWRNADTVVIGRAQNPWKECNTRRMEEDNVRLARRSSGGGAVFHDLGNTCFTFMAGKPEYDKTISTSIVLNALNALGVSAEASGRNDLVVKTAEGDRKVSGSAYRETKDRGFHHGTLLLNADLSRLANYLNPDKKKLAAKGITSVRSRVTNLTELLPGITHEQVCEAITKAFFAHYGERVEAEIISPDKTPDLPNFAETFARQSSWEWNFGQAPAFSHLLDERFSWGGVELHFDVEKGHITRAQVFTDSLNPAPLEALTGRLQGGLYRADMLQQECEALLVDFPDQEKELRELSTWIAGAVR.

The BPL/LPL catalytic domain occupies 29–216; that stretch reads PATQRVLFLW…AFFAHYGERV (188 aa). ATP-binding positions include Arg71, 76–79, and Lys134; that span reads GAVF. Lys134 provides a ligand contact to (R)-lipoate.

Belongs to the LplA family. As to quaternary structure, monomer.

The protein localises to the cytoplasm. The catalysed reaction is L-lysyl-[lipoyl-carrier protein] + (R)-lipoate + ATP = N(6)-[(R)-lipoyl]-L-lysyl-[lipoyl-carrier protein] + AMP + diphosphate + H(+). The protein operates within protein modification; protein lipoylation via exogenous pathway; protein N(6)-(lipoyl)lysine from lipoate: step 1/2. It participates in protein modification; protein lipoylation via exogenous pathway; protein N(6)-(lipoyl)lysine from lipoate: step 2/2. Its function is as follows. Catalyzes both the ATP-dependent activation of exogenously supplied lipoate to lipoyl-AMP and the transfer of the activated lipoyl onto the lipoyl domains of lipoate-dependent enzymes. The chain is Lipoate-protein ligase A from Escherichia coli (strain 55989 / EAEC).